Reading from the N-terminus, the 746-residue chain is MEHTYQYSWIIPFIPLPVPILLGVGLLLFPTATKNLRRMWTFLSIFLLSIVMIFSLYLSIQQIFVSCIHQNVWSWTINNEFSFEFGYFIDPLTSIMSILISTVGILVLIYSDNYMSHDQGYLRFFAYMGFFNTSMLGLVTSSNLIQVYFFWELVGMCSYLLIGFWFTRPIAANACQKAFVTNRVGDFGLLLGILGLYWITGSFEFQDLFEIFNNLILNNRVNLLFLTLCAFLLFVGPIAKSAQFPLHVWLPDAMEGPTPISALIHAATMVAAGIFLVARLLPLFIVIPSIMYIISLIGIITVLLGATLALAQKDIKRGLAYSTMSQLGYMMLALGMGSYRSALFHLITHAYSKALLFLGSGSIIHSMEAIVGYSPDKSQNMILMGGLTKHVPITKTAFLIGTLSLCGIPPLACFWSKDEILNDSLLFSPIFAIIACSTAGLTAFYMFRIYLLTFEGHLNTYFINYSGKKSSSFYSISLWGKEEEKKLNRNFGLVPLLTMNNTKRASFFCKKTYKISNNVRNQTFITVENFGLNTRTFYYPHESDNTILFPMLVLLLFTLFIGAIGIPFNQEGIDFDILSKLFTPSINLLHQNSENLVDWYEFFRNATFSVSIAFFGIFIAYCLYKPFYSSLLNLTLLNLFQKWNSKRIRWEKLINFVYNWSYNRGYIDAFFKTALIESIRRLAKQTNFFDKRIIDGITNGVGITSFFVGEVTKYIGGSRISSYLFLYLSYVLIFLIILFFFYFEKF.

A run of 16 helical transmembrane segments spans residues 9–29 (WIIPFIPLPVPILLGVGLLLF), 40–60 (WTFLSIFLLSIVMIFSLYLSI), 89–109 (IDPLTSIMSILISTVGILVLI), 125–145 (FAYMGFFNTSMLGLVTSSNLI), 147–167 (VYFFWELVGMCSYLLIGFWFT), 185–205 (GDFGLLLGILGLYWITGSFEF), 221–241 (VNLLFLTLCAFLLFVGPIAKS), 258–278 (TPISALIHAATMVAAGIFLVA), 280–300 (LLPLFIVIPSIMYIISLIGII), 327–347 (LGYMMLALGMGSYRSALFHLI), 354–374 (ALLFLGSGSIIHSMEAIVGYS), 396–416 (TAFLIGTLSLCGIPPLACFWS), 425–445 (LLFSPIFAIIACSTAGLTAFY), 547–567 (ILFPMLVLLLFTLFIGAIGIP), 608–628 (FSVSIAFFGIFIAYCLYKPFY), and 723–743 (YLFLYLSYVLIFLIILFFFYF).

It belongs to the complex I subunit 5 family. As to quaternary structure, NDH is composed of at least 16 different subunits, 5 of which are encoded in the nucleus.

Its subcellular location is the plastid. The protein localises to the chloroplast thylakoid membrane. The enzyme catalyses a plastoquinone + NADH + (n+1) H(+)(in) = a plastoquinol + NAD(+) + n H(+)(out). It catalyses the reaction a plastoquinone + NADPH + (n+1) H(+)(in) = a plastoquinol + NADP(+) + n H(+)(out). Its function is as follows. NDH shuttles electrons from NAD(P)H:plastoquinone, via FMN and iron-sulfur (Fe-S) centers, to quinones in the photosynthetic chain and possibly in a chloroplast respiratory chain. The immediate electron acceptor for the enzyme in this species is believed to be plastoquinone. Couples the redox reaction to proton translocation, and thus conserves the redox energy in a proton gradient. The protein is NAD(P)H-quinone oxidoreductase subunit 5, chloroplastic (ndhF) of Lepidium virginicum (Virginia pepperweed).